The primary structure comprises 173 residues: Crossover junction endodeoxyribonuclease RuvC (173 aa).

Catalysis depends on residues aspartate 8, glutamate 67, and aspartate 139. Residues aspartate 8, glutamate 67, and aspartate 139 each contribute to the Mg(2+) site.

It belongs to the RuvC family. As to quaternary structure, homodimer which binds Holliday junction (HJ) DNA. The HJ becomes 2-fold symmetrical on binding to RuvC with unstacked arms; it has a different conformation from HJ DNA in complex with RuvA. In the full resolvosome a probable DNA-RuvA(4)-RuvB(12)-RuvC(2) complex forms which resolves the HJ. Mg(2+) is required as a cofactor.

The protein localises to the cytoplasm. It carries out the reaction Endonucleolytic cleavage at a junction such as a reciprocal single-stranded crossover between two homologous DNA duplexes (Holliday junction).. The RuvA-RuvB-RuvC complex processes Holliday junction (HJ) DNA during genetic recombination and DNA repair. Endonuclease that resolves HJ intermediates. Cleaves cruciform DNA by making single-stranded nicks across the HJ at symmetrical positions within the homologous arms, yielding a 5'-phosphate and a 3'-hydroxyl group; requires a central core of homology in the junction. The consensus cleavage sequence is 5'-(A/T)TT(C/G)-3'. Cleavage occurs on the 3'-side of the TT dinucleotide at the point of strand exchange. HJ branch migration catalyzed by RuvA-RuvB allows RuvC to scan DNA until it finds its consensus sequence, where it cleaves and resolves the cruciform DNA. The sequence is that of Crossover junction endodeoxyribonuclease RuvC from Tolumonas auensis (strain DSM 9187 / NBRC 110442 / TA 4).